A 200-amino-acid chain; its full sequence is uncharacterized protein (200 aa).

A helical membrane pass occupies residues 104–124 (SNLLICFLFLCGLYHISVFTG).

Its subcellular location is the membrane. This is an uncharacterized protein from Escherichia coli (strain K12).